The chain runs to 138 residues: MAEDEDNQQGQGEGLKYLGFVQDAATYAVTTFSNVYLFAKDKSGPLQPGVDIIEGPVKNVAVPLYNRFSYIPNGALKFVDSTVVASVTIIDRSLPPIVKDASIQVVSAIRAAPEAARSLASSLPGQTKILAKVFYGEN.

N-acetylalanine is present on alanine 2.

It belongs to the REF/SRPP family. As to quaternary structure, in solution, able to form amyloid fibers and aggregates rich in beta-sheets. Interaction with membrane stabilizes the protein, inhibiting the amyloid state and aggregation. Not glycosylated. In terms of tissue distribution, localized in all laticifer layers.

The protein resides in the cytoplasm. May be part of the rubber biosynthesis machinery. Plays a role in rubber elongation. This is Rubber elongation factor protein from Hevea brasiliensis (Para rubber tree).